The primary structure comprises 25 residues: Ocellatin-L1 (25 aa).

Leucine 25 bears the Leucine amide mark.

It belongs to the frog skin active peptide (FSAP) family. Ocellatin subfamily. Expressed by the skin glands.

It localises to the secreted. Antimicrobial peptide with activity against Gram-negative bacteria but without activity against Gram-positive bacteria. Shows a low activity in stimulating insulin release from rat BRIN-BD11 beta cells, and acts without loss of integrity of the plasma membrane. Has very low hemolytic activity. Shows weak amphipathicity in its alpha-helical conformation. The protein is Ocellatin-L1 of Leptodactylus laticeps (Santa Fe frog).